Here is a 317-residue protein sequence, read N- to C-terminus: Acetyl-coenzyme A carboxylase carboxyl transferase subunit alpha (317 aa).

In terms of domain architecture, CoA carboxyltransferase C-terminal spans 40–293 (LEKRSADALK…GDIIAASLRS (254 aa)).

This sequence belongs to the AccA family. As to quaternary structure, acetyl-CoA carboxylase is a heterohexamer composed of biotin carboxyl carrier protein (AccB), biotin carboxylase (AccC) and two subunits each of ACCase subunit alpha (AccA) and ACCase subunit beta (AccD).

The protein localises to the cytoplasm. The catalysed reaction is N(6)-carboxybiotinyl-L-lysyl-[protein] + acetyl-CoA = N(6)-biotinyl-L-lysyl-[protein] + malonyl-CoA. It functions in the pathway lipid metabolism; malonyl-CoA biosynthesis; malonyl-CoA from acetyl-CoA: step 1/1. In terms of biological role, component of the acetyl coenzyme A carboxylase (ACC) complex. First, biotin carboxylase catalyzes the carboxylation of biotin on its carrier protein (BCCP) and then the CO(2) group is transferred by the carboxyltransferase to acetyl-CoA to form malonyl-CoA. This chain is Acetyl-coenzyme A carboxylase carboxyl transferase subunit alpha, found in Brucella melitensis biotype 2 (strain ATCC 23457).